The primary structure comprises 427 residues: Glutamate-1-semialdehyde 2,1-aminomutase (427 aa).

Lysine 265 is subject to N6-(pyridoxal phosphate)lysine.

This sequence belongs to the class-III pyridoxal-phosphate-dependent aminotransferase family. HemL subfamily. As to quaternary structure, homodimer. Requires pyridoxal 5'-phosphate as cofactor.

The protein resides in the cytoplasm. It carries out the reaction (S)-4-amino-5-oxopentanoate = 5-aminolevulinate. Its pathway is porphyrin-containing compound metabolism; protoporphyrin-IX biosynthesis; 5-aminolevulinate from L-glutamyl-tRNA(Glu): step 2/2. The sequence is that of Glutamate-1-semialdehyde 2,1-aminomutase from Shewanella amazonensis (strain ATCC BAA-1098 / SB2B).